We begin with the raw amino-acid sequence, 370 residues long: Cobalt-precorrin-5B C(1)-methyltransferase (370 aa).

It belongs to the CbiD family.

The enzyme catalyses Co-precorrin-5B + S-adenosyl-L-methionine = Co-precorrin-6A + S-adenosyl-L-homocysteine. Its pathway is cofactor biosynthesis; adenosylcobalamin biosynthesis; cob(II)yrinate a,c-diamide from sirohydrochlorin (anaerobic route): step 6/10. Catalyzes the methylation of C-1 in cobalt-precorrin-5B to form cobalt-precorrin-6A. The chain is Cobalt-precorrin-5B C(1)-methyltransferase from Pseudomonas syringae pv. syringae (strain B728a).